Reading from the N-terminus, the 369-residue chain is MTERVPPRRPATFKLSDPSVVLIDSDDGGGSYTAKPSAKADARPAASAAGAAPPPPPPRARVELAREAEPPISAPKAPKSVINPKKGFRWGTVFWSAATGLVSLAFWLWISKLVEDLFAQSQTLGTIGMVLALLAGGSLAIIIGREAFGLIRLARIEQLHARAARVLETDNSAEARAIIRELLKFEHPNPQLAHGRATLQKHIDDIIDGADLIRLAERELMAQLDLEAKVLISKAAQRVSLVTAISPKALIDVLFVAIAATRLIGQLARLYGGRPGALGMFKLMRQTVSHLAITGGIALSDSVMQSVLGHGLASRLSAKLGEGVVNGMLTARLGLAAMDLTRPLPFDALPRPQLGDLVKDLMKKREKDE.

The tract at residues Met1–Arg61 is disordered. Residues Ala34–Ala51 are compositionally biased toward low complexity. The next 3 membrane-spanning stretches (helical) occupy residues Trp90–Ile110, Leu124–Gly144, and Val239–Ala259.

The protein belongs to the UPF0283 family.

It localises to the cell inner membrane. The polypeptide is UPF0283 membrane protein RPA1583 (Rhodopseudomonas palustris (strain ATCC BAA-98 / CGA009)).